The chain runs to 252 residues: MVSFTKTFFAIVACALGVQAHGYVDTLNVGGTQYTGYLPYNDPYTTPAPQRIERPIPGNGPVTALTTIDVQCNGENGGGSSPAPLVATIAAGGKIAFHWTTWPSSHVGPVITYLGKVPSSTDVTKYSPTGSDVIWFKIDEGGYSNGKWAATDVLSAQNSTWTVTIPSSLAPGQYIVRHEIIALHQAQTYPGAQSYPDCFQIRVTGSGNKTPSGSYLVSFPGAYTATTPGIAFNVYTNFTSYPIPGPAVWTGN.

The signal sequence occupies residues 1 to 20 (MVSFTKTFFAIVACALGVQA). The Cu(2+) site is built by His21 and His106. Residues Cys72 and Cys198 are joined by a disulfide bond. N-linked (GlcNAc...) asparagine glycosylation occurs at Asn158. Residues His184 and Gln193 each coordinate O2. Residue Tyr195 participates in Cu(2+) binding. A glycan (N-linked (GlcNAc...) asparagine) is linked at Asn237.

Belongs to the polysaccharide monooxygenase AA9 family. Cu(2+) serves as cofactor.

It is found in the secreted. It catalyses the reaction [(1-&gt;4)-beta-D-glucosyl]n+m + reduced acceptor + O2 = 4-dehydro-beta-D-glucosyl-[(1-&gt;4)-beta-D-glucosyl]n-1 + [(1-&gt;4)-beta-D-glucosyl]m + acceptor + H2O.. Its function is as follows. Lytic polysaccharide monooxygenase (LPMO) that depolymerizes crystalline and amorphous polysaccharides via the oxidation of scissile alpha- or beta-(1-4)-glycosidic bonds, yielding C1 or C4 oxidation products. Catalysis by LPMOs requires the reduction of the active-site copper from Cu(II) to Cu(I) by a reducing agent and H(2)O(2) or O(2) as a cosubstrate. The synergistic activity of LPMO9B with xylanase Xyl10G or cellulase Cel5B shows efficient bioconversion rates of 56 and 174 percent in pretreated kenaf (Hibiscus cannabinus) and oak, respectively. The protein is AA9 family lytic polysaccharide monooxygenase B of Gloeophyllum trabeum (strain ATCC 11539 / FP-39264 / Madison 617) (Brown rot fungus).